Consider the following 280-residue polypeptide: Bis(5'-nucleosyl)-tetraphosphatase, symmetrical (280 aa).

Belongs to the Ap4A hydrolase family.

It carries out the reaction P(1),P(4)-bis(5'-adenosyl) tetraphosphate + H2O = 2 ADP + 2 H(+). Its function is as follows. Hydrolyzes diadenosine 5',5'''-P1,P4-tetraphosphate to yield ADP. The protein is Bis(5'-nucleosyl)-tetraphosphatase, symmetrical of Paracidovorax citrulli (strain AAC00-1) (Acidovorax citrulli).